The chain runs to 356 residues: Testis-expressed protein 19.1 (356 aa).

An interaction with LIRE1 region spans residues 1–78; it reads MCPPVSVRHG…WDAEPMEHLS (78 aa). Over residues 59-72 the composition is skewed to acidic residues; it reads LSEEEEEEEVWDAE. The interval 59–107 is disordered; it reads LSEEEEEEEVWDAEPMEHLSESESLESDSKQDAGSEQDAGSEPNTRSEQ. The span at 73–91 shows a compositional bias: basic and acidic residues; it reads PMEHLSESESLESDSKQDA. Positions 139–186 are important for interaction with piRNA; that stretch reads QWVVFSISVPTELLPQEAVPLDLGPEDVEWTQALPWRLDVLFPCSHRL.

Interacts with UBR2; does not lead to Tex19.1 degradation and stabilizes it. Interacts with piRNA-associated proteins DDX4, EDC4, MAEL, PIWIL1, PIWIL2, RANBP9 and TDRD6. Interacts with L1RE1.

It localises to the cytoplasm. Required during spermatogenesis and placenta development, participating in the repression of retrotransposable elements and prevent their mobilization. Collaborates with the Piwi-interacting RNA (piRNA) pathway, which mediates the repression of transposable elements during meiosis by forming complexes composed of piRNAs and Piwi proteins. Interacts with Piwi proteins and directly binds piRNAs, a class of 24 to 30 nucleotide RNAs that are generated by a Dicer-independent mechanism and are primarily derived from transposons and other repeated sequence elements. Also during spermatogenesis, promotes, with UBR2, SPO11-dependent recombination foci to accumulate and drive robust homologous chromosome synapsis. Interacts with LINE-1 retrotransposon encoded LIRE1, stimulates LIRE1 polyubiquitination, mediated by UBR2, and degradation, inhibiting LINE-1 retrotransposon mobilization. This is Testis-expressed protein 19.1 (Tex19.1) from Rattus norvegicus (Rat).